The chain runs to 323 residues: Fructose-1,6-bisphosphatase class 1 (323 aa).

The Mg(2+) site is built by Glu-88, Asp-107, Leu-109, and Asp-110. Substrate is bound by residues 110–113 and Asn-200; that span reads DGSS. Residue Glu-272 participates in Mg(2+) binding.

The protein belongs to the FBPase class 1 family. Homotetramer. It depends on Mg(2+) as a cofactor.

It localises to the cytoplasm. It catalyses the reaction beta-D-fructose 1,6-bisphosphate + H2O = beta-D-fructose 6-phosphate + phosphate. The protein operates within carbohydrate biosynthesis; gluconeogenesis. This is Fructose-1,6-bisphosphatase class 1 from Acinetobacter baylyi (strain ATCC 33305 / BD413 / ADP1).